The primary structure comprises 368 residues: Ferredoxin--NADP reductase 2 (368 aa).

FAD contacts are provided by D57, Q65, Y70, V110, F145, D310, and T351.

It belongs to the ferredoxin--NADP reductase type 2 family. As to quaternary structure, homodimer. It depends on FAD as a cofactor.

It catalyses the reaction 2 reduced [2Fe-2S]-[ferredoxin] + NADP(+) + H(+) = 2 oxidized [2Fe-2S]-[ferredoxin] + NADPH. In Cupriavidus pinatubonensis (strain JMP 134 / LMG 1197) (Cupriavidus necator (strain JMP 134)), this protein is Ferredoxin--NADP reductase 2.